Consider the following 360-residue polypeptide: MQDRIRKIIHVDMDCFFAAVEMRDNPAYREIALAVGGHEKQRGVISTCNYQARKFGVRSAMPTAQALKLCPQLHVVPGRMSVYKSVSQQIQTIFQRYTSLIEPLSLDEAYLDVSESTAYQGSATLIAQAIRRDIWQELNLTASAGVAPIKFLAKVASDLNKPNGLYVVTPDKVQEMVDSLPLEKIPGVGKVALEKLHQAGLYVGADVRRADYRKLLHQFGRLGASLWKKSHGIDEREVVTERERKSVGVEYTFSQNISTFQECWQVIEQKLYPELDARLSRAHPQRGIIKQGIKVKFADFQQTTIEHVHPALELDYFHELLEQVLTRQQGREIRLLGLSVMLKPELQMKQLSMFPSDGWQ.

Positions 8–189 (IIHVDMDCFF…LPLEKIPGVG (182 aa)) constitute a UmuC domain. Residues aspartate 12 and aspartate 107 each contribute to the Mg(2+) site. Residue glutamate 108 is part of the active site.

This sequence belongs to the DNA polymerase type-Y family. In terms of assembly, monomer. It depends on Mg(2+) as a cofactor.

The protein localises to the cytoplasm. It catalyses the reaction DNA(n) + a 2'-deoxyribonucleoside 5'-triphosphate = DNA(n+1) + diphosphate. Poorly processive, error-prone DNA polymerase involved in untargeted mutagenesis. Copies undamaged DNA at stalled replication forks, which arise in vivo from mismatched or misaligned primer ends. These misaligned primers can be extended by PolIV. Exhibits no 3'-5' exonuclease (proofreading) activity. May be involved in translesional synthesis, in conjunction with the beta clamp from PolIII. This is DNA polymerase IV from Vibrio cholerae serotype O1 (strain ATCC 39541 / Classical Ogawa 395 / O395).